Reading from the N-terminus, the 301-residue chain is Mitochondrial carnitine/acylcarnitine carrier protein (301 aa).

Ala2 is modified (N-acetylalanine). Over 2–12 the chain is Cytoplasmic; the sequence is ADEPKPISPFK. 3 Solcar repeats span residues 8 to 99, 108 to 196, and 207 to 293; these read ISPF…GKKL, LSYP…LKNL, and LSVP…AMKF. The chain crosses the membrane as a helical span at residues 13 to 31; sequence NLLAGGFGGMCLVFVGHPL. Topologically, residues 32–73 are mitochondrial matrix; it reads DTVKVRLQTQPPSLSGQPPMYSGTLDCFRKTLMREGITGLYR. The helical transmembrane segment at 74–93 threads the bilayer; that stretch reads GMAAPIIGVTPMFAVCFFGF. Topologically, residues 94–112 are cytoplasmic; sequence GLGKKLQQKSPEDELSYPQ. Residues 113-131 traverse the membrane as a helical segment; the sequence is LFTAGMLSGVFTTGIMTPG. At 132 to 170 the chain is on the mitochondrial matrix side; the sequence is ERIKCLLQIQASSGENKYSGTLDCAKKLYQEFGIRGFYK. N6-acetyllysine occurs at positions 148 and 157. Lys170 bears the N6-acetyllysine; alternate mark. Lys170 carries the post-translational modification N6-succinyllysine; alternate. A helical membrane pass occupies residues 171-190; the sequence is GTVLTLMRDVPASGMYFMTY. The Cytoplasmic segment spans residues 191–211; the sequence is EWLKNLFTPEGKSVSDLSVPR. The chain crosses the membrane as a helical span at residues 212–230; the sequence is ILVAGGFAGIFNWAVAIPP. Residues 231–267 are Mitochondrial matrix-facing; it reads DVLKSRFQTAPPGKYPNGFRDVLRELIREEGVTSLYK. Residues 268–287 traverse the membrane as a helical segment; sequence GFNAVMIRAFPANAACFLGF. The Cytoplasmic portion of the chain corresponds to 288 to 301; the sequence is EIAMKFLNWIAPNL.

This sequence belongs to the mitochondrial carrier (TC 2.A.29) family. As to expression, widely expressed, with highest levels in the liver, intermediate levels in heart, testis and kidney and low levels in brain, including cortex, cerebellum, hippocampus and hypothalamus.

Its subcellular location is the mitochondrion inner membrane. It carries out the reaction O-acetyl-(R)-carnitine(in) + (R)-carnitine(out) = O-acetyl-(R)-carnitine(out) + (R)-carnitine(in). The catalysed reaction is an O-acyl-(R)-carnitine(in) + (R)-carnitine(out) = an O-acyl-(R)-carnitine(out) + (R)-carnitine(in). The enzyme catalyses O-propanoyl-(R)-carnitine(in) + (R)-carnitine(out) = O-propanoyl-(R)-carnitine(out) + (R)-carnitine(in). It catalyses the reaction O-hexadecanoyl-(R)-carnitine(in) + (R)-carnitine(out) = O-hexadecanoyl-(R)-carnitine(out) + (R)-carnitine(in). It carries out the reaction O-octanoyl-(R)-carnitine(in) + (R)-carnitine(out) = O-octanoyl-(R)-carnitine(out) + (R)-carnitine(in). The catalysed reaction is (R)-carnitine(in) = (R)-carnitine(out). Functionally, mediates the electroneutral exchange of acylcarnitines (O-acyl-(R)-carnitine or L-acylcarnitine) of different acyl chain lengths (ranging from O-acetyl-(R)-carnitine to long-chain O-acyl-(R)-carnitines) with free carnitine ((R)-carnitine or L-carnitine) across the mitochondrial inner membrane, via a ping-pong mechanism. Key player in the mitochondrial oxidation pathway, it translocates the fatty acids in the form of acylcarnitines into the mitochondrial matrix, where the carnitine palmitoyltransferase 2 (CPT-2) activates them to undergo fatty acid beta-oxidation. Catalyzes the unidirectional transport (uniport) of carnitine at lower rates than the antiport (exchange). The sequence is that of Mitochondrial carnitine/acylcarnitine carrier protein from Mus musculus (Mouse).